A 194-amino-acid polypeptide reads, in one-letter code: Peptidyl-tRNA hydrolase (194 aa).

Tyrosine 17 is a binding site for tRNA. Histidine 22 functions as the Proton acceptor in the catalytic mechanism. The tRNA site is built by tyrosine 68, asparagine 70, and asparagine 116.

This sequence belongs to the PTH family. Monomer.

The protein resides in the cytoplasm. It carries out the reaction an N-acyl-L-alpha-aminoacyl-tRNA + H2O = an N-acyl-L-amino acid + a tRNA + H(+). In terms of biological role, hydrolyzes ribosome-free peptidyl-tRNAs (with 1 or more amino acids incorporated), which drop off the ribosome during protein synthesis, or as a result of ribosome stalling. Its function is as follows. Catalyzes the release of premature peptidyl moieties from peptidyl-tRNA molecules trapped in stalled 50S ribosomal subunits, and thus maintains levels of free tRNAs and 50S ribosomes. The sequence is that of Peptidyl-tRNA hydrolase from Pseudomonas fluorescens (strain SBW25).